The sequence spans 283 residues: Acetylglutamate kinase (283 aa).

Residues 63–64 (GG), Arg-85, and Asn-178 contribute to the substrate site.

This sequence belongs to the acetylglutamate kinase family. ArgB subfamily.

Its subcellular location is the cytoplasm. It carries out the reaction N-acetyl-L-glutamate + ATP = N-acetyl-L-glutamyl 5-phosphate + ADP. It participates in amino-acid biosynthesis; L-arginine biosynthesis; N(2)-acetyl-L-ornithine from L-glutamate: step 2/4. Its function is as follows. Catalyzes the ATP-dependent phosphorylation of N-acetyl-L-glutamate. The chain is Acetylglutamate kinase from Prochlorococcus marinus (strain MIT 9515).